The chain runs to 243 residues: Triosephosphate isomerase (243 aa).

Residue 9 to 11 (NWK) participates in substrate binding. His-96 functions as the Electrophile in the catalytic mechanism. The Proton acceptor role is filled by Glu-165. Residues Gly-171, Ser-204, and 225–226 (GG) each bind substrate.

Belongs to the triosephosphate isomerase family. As to quaternary structure, homodimer.

Its subcellular location is the cytoplasm. It catalyses the reaction D-glyceraldehyde 3-phosphate = dihydroxyacetone phosphate. It functions in the pathway carbohydrate biosynthesis; gluconeogenesis. It participates in carbohydrate degradation; glycolysis; D-glyceraldehyde 3-phosphate from glycerone phosphate: step 1/1. In terms of biological role, involved in the gluconeogenesis. Catalyzes stereospecifically the conversion of dihydroxyacetone phosphate (DHAP) to D-glyceraldehyde-3-phosphate (G3P). This is Triosephosphate isomerase from Prochlorococcus marinus (strain SARG / CCMP1375 / SS120).